Here is a 205-residue protein sequence, read N- to C-terminus: Delta-aminolevulinic acid dehydratase (205 aa).

Cys-117, Cys-119, and Cys-127 together coordinate Zn(2+). Lys-192 acts as the Schiff-base intermediate with substrate in catalysis. Arg-202 is a binding site for substrate.

The protein belongs to the ALAD family. In terms of assembly, homooctamer. It depends on Zn(2+) as a cofactor.

The catalysed reaction is 2 5-aminolevulinate = porphobilinogen + 2 H2O + H(+). It participates in porphyrin-containing compound metabolism; protoporphyrin-IX biosynthesis; coproporphyrinogen-III from 5-aminolevulinate: step 1/4. In terms of biological role, catalyzes an early step in the biosynthesis of tetrapyrroles. Binds two molecules of 5-aminolevulinate per subunit, each at a distinct site, and catalyzes their condensation to form porphobilinogen. This chain is Delta-aminolevulinic acid dehydratase (hemB), found in Ruminiclostridium josui (Clostridium josui).